The sequence spans 1812 residues: Sperm flagellar protein 2 (1812 aa).

The region spanning 1–105 is the Calponin-homology (CH) domain; sequence MSEILCHWLN…LLYQLYIALQ (105 aa). Coiled coils occupy residues 178-260 and 374-403; these read LENF…KDLQ and EERR…EEQA. Residues 618-630 are compositionally biased toward basic and acidic residues; that stretch reads EEKASPVRQESGD. The interval 618 to 658 is disordered; it reads EEKASPVRQESGDRSQNLHNVLSAEGTPETEDETRLSTKKT. Coiled coils occupy residues 724-750, 803-827, and 868-897; these read LNQA…KKSQ, ENIN…DQIQ, and KEMF…KEEF. Positions 879 to 897 are enriched in basic and acidic residues; that stretch reads ENKAKKKSEEKEAEKKEEF. 3 disordered regions span residues 879–1002, 1272–1322, and 1793–1812; these read ENKA…KPGS, EEKE…APVI, and EHIQ…EEKK. Residues 902–913 show a composition bias toward pro residues; that stretch reads ATPPTPPAPPPS. Basic and acidic residues-rich tracts occupy residues 914 to 929, 943 to 961, and 1272 to 1285; these read EPEK…ERSK, HGNR…ETSP, and EEKE…KEKP. Over residues 1292–1310 the composition is skewed to basic residues; it reads KKVKKEPPKKKREDKKGKG. Residues 1317 to 1669 are interaction with IFT20; it reads ESAPVITVEE…AEKTSSFIDM (353 aa).

As to quaternary structure, interacts (via C-terminus) with IFT20. Interacts with DYNC1I2. As to expression, predominantly expressed in ciliated tissues. Mainly expressed in testis, followed by trachea. Also expressed at lower level in lung, kidney and liver.

It localises to the cell projection. It is found in the cilium. Its subcellular location is the flagellum. The protein resides in the cytoplasm. The protein localises to the golgi apparatus. In terms of biological role, required for correct axoneme development in spermatozoa. Important for normal development of the manchette and sperm head morphology. Essential for male fertility. Plays a role in localization of the intraflagellar transport protein IFT20 to the manchette, suggesting function as an adapter for dynein-mediated protein transport during spermatogenesis. Also plays a role in bone growth where it seems to be required for normal osteoblast differentiation. In Sus scrofa (Pig), this protein is Sperm flagellar protein 2 (SPEF2).